The sequence spans 315 residues: Heme oxygenase 2 (315 aa).

A compositionally biased stretch (polar residues) spans 1–15 (MSSEVETSEGVDESE). The segment at 1-29 (MSSEVETSEGVDESENNSTAPEKENHTKM) is disordered. At serine 2 the chain carries N-acetylserine. Serine 2 carries the post-translational modification Phosphoserine. Topologically, residues 2-294 (SSEVETSEGV…TAMAVLRKPS (293 aa)) are cytoplasmic. Positions 44, 153, 198, and 202 each coordinate heme b. HRM repeat units follow at residues 263–268 (KCPFYA) and 280–285 (NCPFRT). S-nitrosocysteine is present on residues cysteine 264 and cysteine 281. A helical; Anchor for type IV membrane protein transmembrane segment spans residues 295 to 315 (LQLILAASVALVAGLLAWYYM).

It belongs to the heme oxygenase family. Post-translationally, a soluble form arises by proteolytic removal of the membrane anchor. S-nitrosylated by BLVRB. In terms of tissue distribution, widely distributed in body with a high concentration in the brain.

Its subcellular location is the microsome membrane. The protein localises to the endoplasmic reticulum membrane. It carries out the reaction heme b + 3 reduced [NADPH--hemoprotein reductase] + 3 O2 = biliverdin IXalpha + CO + Fe(2+) + 3 oxidized [NADPH--hemoprotein reductase] + 3 H2O + H(+). Its activity is regulated as follows. Inhibited by metalloporphyrins such as Sn- and Zn-protoporphyrins. Functionally, catalyzes the oxidative cleavage of heme at the alpha-methene bridge carbon, released as carbon monoxide (CO), to generate biliverdin IXalpha, while releasing the central heme iron chelate as ferrous iron. The sequence is that of Heme oxygenase 2 (Hmox2) from Rattus norvegicus (Rat).